Here is a 188-residue protein sequence, read N- to C-terminus: Probable DNA-directed RNA polymerase subunit delta (188 aa).

Positions 14–83 (LSMIEVARAI…GDNKWGLRSW (70 aa)) constitute an HTH HARE-type domain. The segment at 117 to 188 (GDEDAIDYSD…EDDEDDEEEE (72 aa)) is disordered.

It belongs to the RpoE family. In terms of assembly, RNAP is composed of a core of 2 alpha, a beta and a beta' subunits. The core is associated with a delta subunit and one of several sigma factors.

In terms of biological role, participates in both the initiation and recycling phases of transcription. In the presence of the delta subunit, RNAP displays an increased specificity of transcription, a decreased affinity for nucleic acids, and an increased efficiency of RNA synthesis because of enhanced recycling. The protein is Probable DNA-directed RNA polymerase subunit delta of Streptococcus uberis (strain ATCC BAA-854 / 0140J).